Consider the following 59-residue polypeptide: Large ribosomal subunit protein bL32c (59 aa).

The protein belongs to the bacterial ribosomal protein bL32 family.

Its subcellular location is the plastid. The protein resides in the chloroplast. The polypeptide is Large ribosomal subunit protein bL32c (Physcomitrium patens (Spreading-leaved earth moss)).